Reading from the N-terminus, the 147-residue chain is Putative pre-16S rRNA nuclease (147 aa).

This sequence belongs to the YqgF nuclease family.

It localises to the cytoplasm. Could be a nuclease involved in processing of the 5'-end of pre-16S rRNA. This is Putative pre-16S rRNA nuclease from Latilactobacillus sakei subsp. sakei (strain 23K) (Lactobacillus sakei subsp. sakei).